We begin with the raw amino-acid sequence, 172 residues long: Translation initiation factor IF-3 (172 aa).

Belongs to the IF-3 family. In terms of assembly, monomer.

It is found in the cytoplasm. Its function is as follows. IF-3 binds to the 30S ribosomal subunit and shifts the equilibrium between 70S ribosomes and their 50S and 30S subunits in favor of the free subunits, thus enhancing the availability of 30S subunits on which protein synthesis initiation begins. The sequence is that of Translation initiation factor IF-3 from Geobacillus stearothermophilus (Bacillus stearothermophilus).